The sequence spans 1047 residues: Rab11 family-interacting protein 3 (1047 aa).

Disordered stretches follow at residues 1-107, 311-335, and 475-496; these read MELC…WPQE, SHSCPQEADTGCLSAKEPEEPDVSH, and PGPPSDPGPALSLPSEPGTAQE. Positions 64–73 are enriched in basic and acidic residues; sequence EPHAPSRWAK. 2 EF-hand domains span residues 496–531 and 528–563; these read EEGARLRAVFDALDRDGDGFVRIEDFIQFATVYGAE and YGAEQVKDLTQYLDPSGLGVISFEDFYQGIVAIRNG. Residues D509, D511, D513, D520, D541, S543, and D552 each contribute to the Ca(2+) site. S641, S765, and S829 each carry phosphoserine. Positions 750 to 985 form a coiled coil; it reads EEDIADKVIF…NGQIITLSIQ (236 aa). Residues 775 to 879 are ARF-binding domain (ABD); the sequence is GEQHGRLRQE…MLDEIEELTQ (105 aa). Residues 882 to 906 are disordered; that stretch reads SEEQENKRKMGDRLSHERHQFQRDK. S938 and S939 each carry phosphoserine. The FIP-RBD domain occupies 985–1047; the sequence is QGAKSLFSTS…ETNPSILEVK (63 aa).

As to quaternary structure, homodimer. Interacts with RAB11A; the interaction is direct and is required for the recruitment to endosomes. Interacts with RAB11B. Forms a ternary complex with RAB11A and dynein intermediate chain DYNC1LI1; RAB11FIP3 links RAB11A to dynein and the interaction regulates endocytic trafficking. Interacts with dynein intermediate chain and dynactin (DCTN1); the interaction activates dynein processivity. Interacts with ARF6 and EXOC7; the interaction serves for recruitment and tethering of recycling endosomes-derived vesicles to the cleavage furrow/midbody. Interacts with RACGAP1/MgcRacGAP; the interaction occurs at late telophase and is required for recruitment and tethering of recycling endosomes-derived vesicles to the cleavage furrow/midbody. Forms a complex with RAB11A and Rabin8/RAB3IP, probably a heterohexamer with two of each protein subunit, where RAB3IP and RAB11FIP3 simultaneously bind to RAB11A; the complex promotes preciliary trafficking. Forms a complex containing RAB11A, ASAP1, RAB3IP, RAP11FIP3 and ARF4; the complex promotes preciliary trafficking; the complex binds to RHO in photoreceptor cells and promotes RHO ciliary transport. Interacts with RAB11FIP4. Interacts with RAB25.

The protein resides in the recycling endosome membrane. It localises to the cytoplasm. Its subcellular location is the cytoskeleton. The protein localises to the microtubule organizing center. It is found in the centrosome. The protein resides in the cleavage furrow. It localises to the midbody. Its subcellular location is the golgi apparatus membrane. The protein localises to the golgi apparatus. It is found in the trans-Golgi network membrane. In terms of biological role, downstream effector molecule for Rab11 GTPase which is involved in endocytic trafficking, cytokinesis and intracellular ciliogenesis by participating in membrane delivery. Recruited by Rab11 to endosomes where it links Rab11 to dynein motor complex. The functional Rab11-RAB11FIP3-dynein complex regulates the movement of peripheral sorting endosomes (SE) along microtubule tracks toward the microtubule organizing center/centrosome, generating the endocytic recycling compartment (ERC) during interphase of cell cycle. Facilitates the interaction between dynein and dynactin and activates dynein processivity. Binding with ASAP1 is needed to regulate the pericentrosomal localization of recycling endosomes. The Rab11-RAB11FIP3 complex is also implicated in the transport during telophase of vesicles derived from recycling endosomes to the cleavage furrow via centrosome-anchored microtubules, where the vesicles function to deliver membrane during late cytokinesis and abscission. The recruitment of Rab11-RAB11FIP3-containing endosomes to the cleavage furrow and tethering to the midbody is co-mediated by RAB11FIP3 interaction with ARF6-exocyst and RACGAP1-MKLP1 tethering complexes. Also involved in the Rab11-Rabin8-Rab8 ciliogenesis cascade by facilitating the orderly assembly of a ciliary targeting complex containing Rab11, ASAP1, Rabin8/RAB3IP, RAB11FIP3 and ARF4, which directs preciliary vesicle trafficking to mother centriole and ciliogenesis initiation. Also promotes the activity of Rab11 and ASAP1 in the ARF4-dependent Golgi-to-cilia transport of the sensory receptor rhodopsin. Competes with WDR44 for binding to Rab11, which controls intracellular ciliogenesis pathway. May play a role in breast cancer cell motility by regulating actin cytoskeleton. This is Rab11 family-interacting protein 3 from Mus musculus (Mouse).